Consider the following 367-residue polypeptide: N-acetylmuramoyl-L-alanine amidase BlyA (367 aa).

An N-acetylmuramoyl-L-alanine amidase domain is found at 24 to 158 (VKKCVLHYTA…DITHKNCPAP (135 aa)). A disordered region spans residues 178–204 (SGKSVSKASPTKPTTSSPSSSSAVSGS). Residues 180–204 (KSVSKASPTKPTTSSPSSSSAVSGS) are compositionally biased toward low complexity. SH3b domains follow at residues 202–271 (SGSL…YVDV) and 298–367 (GKIK…GSTI).

This sequence belongs to the N-acetylmuramoyl-L-alanine amidase 2 family.

It is found in the secreted. It carries out the reaction Hydrolyzes the link between N-acetylmuramoyl residues and L-amino acid residues in certain cell-wall glycopeptides.. Functionally, autolysins are involved in some important biological processes such as cell separation, cell-wall turnover, competence for genetic transformation, formation of the flagella and sporulation. Involved in prophage SP-beta-mediated cell lysis. The protein is N-acetylmuramoyl-L-alanine amidase BlyA (blyA) of Bacillus subtilis (strain 168).